The following is a 285-amino-acid chain: Polyamine aminopropyltransferase (285 aa).

In terms of domain architecture, PABS spans 2–237; that stretch reads QMWFSQYHTV…GYWLFGFASK (236 aa). Q31 is an S-methyl-5'-thioadenosine binding site. D86 serves as a coordination point for spermidine. S-methyl-5'-thioadenosine contacts are provided by residues E106 and 137-138; that span reads DG. Residue D155 is the Proton acceptor of the active site. 155 to 158 is a spermidine binding site; that stretch reads DSTD.

The protein belongs to the spermidine/spermine synthase family. In terms of assembly, homodimer or homotetramer.

Its subcellular location is the cytoplasm. It carries out the reaction S-adenosyl 3-(methylsulfanyl)propylamine + putrescine = S-methyl-5'-thioadenosine + spermidine + H(+). It functions in the pathway amine and polyamine biosynthesis; spermidine biosynthesis; spermidine from putrescine: step 1/1. In terms of biological role, catalyzes the irreversible transfer of a propylamine group from the amino donor S-adenosylmethioninamine (decarboxy-AdoMet) to putrescine (1,4-diaminobutane) to yield spermidine. In Agathobacter rectalis (strain ATCC 33656 / DSM 3377 / JCM 17463 / KCTC 5835 / VPI 0990) (Eubacterium rectale), this protein is Polyamine aminopropyltransferase.